A 547-amino-acid chain; its full sequence is Large cysteine-rich periplasmic protein OmcB (547 aa).

An N-terminal signal peptide occupies residues 1–22 (MNKLIRRAVTIFAVTSVASLFA). The propeptide occupies 23–40 (SGVLETSMAESLSTNVIS). A disordered region spans residues 45 to 84 (KAKDNTSHKSKKARKNHSKETPVDRKEVAPVHESKATGPK). Basic residues predominate over residues 52–61 (HKSKKARKNH). Over residues 62–79 (SKETPVDRKEVAPVHESK) the composition is skewed to basic and acidic residues.

As to quaternary structure, part of a disulfide cross-linked outer membrane complex (COMC) composed of the major outer membrane porin (MOMP), the small cysteine-rich protein (OmcA) and the large cysteine-rich periplasmic protein (OmcB).

The protein resides in the periplasm. Functionally, in elementary bodies (EBs, the infectious stage, which is able to survive outside the host cell) provides the structural integrity of the outer envelope through disulfide cross-links with the small cysteine-rich protein and the major outer membrane protein. It has been described in publications as the Sarkosyl-insoluble COMC (Chlamydia outer membrane complex), and serves as the functional equivalent of peptidoglycan. In Chlamydia trachomatis serovar D (strain ATCC VR-885 / DSM 19411 / UW-3/Cx), this protein is Large cysteine-rich periplasmic protein OmcB (omcB).